A 416-amino-acid chain; its full sequence is Tryptophan synthase beta chain (416 aa).

Positions 1 to 23 (MTSTLPSQPKDMELANSSRPSVH) are disordered. At Lys-109 the chain carries N6-(pyridoxal phosphate)lysine.

The protein belongs to the TrpB family. Tetramer of two alpha and two beta chains. Pyridoxal 5'-phosphate serves as cofactor.

It catalyses the reaction (1S,2R)-1-C-(indol-3-yl)glycerol 3-phosphate + L-serine = D-glyceraldehyde 3-phosphate + L-tryptophan + H2O. It functions in the pathway amino-acid biosynthesis; L-tryptophan biosynthesis; L-tryptophan from chorismate: step 5/5. The beta subunit is responsible for the synthesis of L-tryptophan from indole and L-serine. This is Tryptophan synthase beta chain from Prochlorococcus marinus (strain MIT 9211).